The sequence spans 109 residues: Large ribosomal subunit protein uL24 (109 aa).

It belongs to the universal ribosomal protein uL24 family. As to quaternary structure, part of the 50S ribosomal subunit.

Functionally, one of two assembly initiator proteins, it binds directly to the 5'-end of the 23S rRNA, where it nucleates assembly of the 50S subunit. Its function is as follows. One of the proteins that surrounds the polypeptide exit tunnel on the outside of the subunit. The chain is Large ribosomal subunit protein uL24 from Ehrlichia ruminantium (strain Gardel).